The primary structure comprises 327 residues: Movement protein (327 aa).

Residues 297 to 327 adopt a coiled-coil conformation; it reads IASSSSTENELARVSQNIDLLKNKLKEICGE.

Belongs to the caulimoviridae movement protein family. In terms of assembly, homotrimer, through the coiled-coil domain. Interacts with VAP. May interact (via N-terminus) with host prenylated Rab acceptor protein 1D (PRA1D).

It is found in the host cell junction. Its subcellular location is the host plasmodesma. Transports viral genome to neighboring plant cells directly through plasmosdesmata, without any budding. The movement protein allows efficient cell to cell propagation, by bypassing the host cell wall barrier. Acts by forming tubules structures that increase the size exclusion limit (SEL) of plasmodesmata, thereby allowing viral ribonucleocapsids to spread directly to neighboring cells. The protein is Movement protein of Cauliflower mosaic virus (strain D/H) (CaMV).